The sequence spans 197 residues: Probable UbiX-like flavin prenyltransferase (197 aa).

FMN-binding positions include 9–11 (GAT), Ser-36, 87–90 (SMKT), and Arg-122.

This sequence belongs to the UbiX/PAD1 family. YclB subfamily. Homododecamer.

The enzyme catalyses dimethylallyl phosphate + FMNH2 = prenylated FMNH2 + phosphate. Its function is as follows. Involved in the non-oxidative decarboxylation and detoxification of phenolic derivatives under both aerobic and anaerobic conditions. Flavin prenyltransferase that catalyzes the synthesis of the prenylated FMN cofactor (prenyl-FMN) for phenolic acid decarboxylase. The protein is Probable UbiX-like flavin prenyltransferase of Escherichia coli O157:H7.